Here is a 412-residue protein sequence, read N- to C-terminus: Multifunctional CCA protein (412 aa).

Gly8 and Arg11 together coordinate ATP. Residues Gly8 and Arg11 each contribute to the CTP site. Mg(2+) is bound by residues Asp21 and Asp23. ATP is bound by residues Arg91, Arg137, and Arg140. Positions 91, 137, and 140 each coordinate CTP. The HD domain occupies 228–329; sequence TGIHTMMVLE…VKLFDKADFW (102 aa).

The protein belongs to the tRNA nucleotidyltransferase/poly(A) polymerase family. Bacterial CCA-adding enzyme type 1 subfamily. Monomer. Can also form homodimers and oligomers. Requires Mg(2+) as cofactor. It depends on Ni(2+) as a cofactor.

The enzyme catalyses a tRNA precursor + 2 CTP + ATP = a tRNA with a 3' CCA end + 3 diphosphate. It catalyses the reaction a tRNA with a 3' CCA end + 2 CTP + ATP = a tRNA with a 3' CCACCA end + 3 diphosphate. In terms of biological role, catalyzes the addition and repair of the essential 3'-terminal CCA sequence in tRNAs without using a nucleic acid template. Adds these three nucleotides in the order of C, C, and A to the tRNA nucleotide-73, using CTP and ATP as substrates and producing inorganic pyrophosphate. tRNA 3'-terminal CCA addition is required both for tRNA processing and repair. Also involved in tRNA surveillance by mediating tandem CCA addition to generate a CCACCA at the 3' terminus of unstable tRNAs. While stable tRNAs receive only 3'-terminal CCA, unstable tRNAs are marked with CCACCA and rapidly degraded. The polypeptide is Multifunctional CCA protein (Shewanella pealeana (strain ATCC 700345 / ANG-SQ1)).